Consider the following 354-residue polypeptide: Protein RecA (354 aa).

G67–T74 lines the ATP pocket.

This sequence belongs to the RecA family.

It localises to the cytoplasm. Can catalyze the hydrolysis of ATP in the presence of single-stranded DNA, the ATP-dependent uptake of single-stranded DNA by duplex DNA, and the ATP-dependent hybridization of homologous single-stranded DNAs. It interacts with LexA causing its activation and leading to its autocatalytic cleavage. The protein is Protein RecA of Enterobacter agglomerans (Erwinia herbicola).